The following is a 184-amino-acid chain: Protein GrpE (184 aa).

A compositionally biased stretch (polar residues) spans 1–14; it reads MANEQNEQSQDLSS. The disordered stretch occupies residues 1–35; it reads MANEQNEQSQDLSSEQTTQDHEQTQTEGVEQGAEI.

Belongs to the GrpE family. In terms of assembly, homodimer.

The protein localises to the cytoplasm. In terms of biological role, participates actively in the response to hyperosmotic and heat shock by preventing the aggregation of stress-denatured proteins, in association with DnaK and GrpE. It is the nucleotide exchange factor for DnaK and may function as a thermosensor. Unfolded proteins bind initially to DnaJ; upon interaction with the DnaJ-bound protein, DnaK hydrolyzes its bound ATP, resulting in the formation of a stable complex. GrpE releases ADP from DnaK; ATP binding to DnaK triggers the release of the substrate protein, thus completing the reaction cycle. Several rounds of ATP-dependent interactions between DnaJ, DnaK and GrpE are required for fully efficient folding. In Acinetobacter baylyi (strain ATCC 33305 / BD413 / ADP1), this protein is Protein GrpE.